The primary structure comprises 131 residues: MAAAVAMETDDAGNRLRFQLELEFVQCLANPNYLNFLAQRGYFKDKAFVNYLKYLLYWKEPEYAKYLKYPQCLHMLELLQYEHFRKELVNAQCAKFIDEQQILHWQHYSRKRMRLQQALAEQQQQNNASGK.

Ala2 carries the N-acetylalanine modification.

This sequence belongs to the Mediator complex subunit 31 family. In terms of assembly, component of the Mediator complex, which is composed of MED1, MED4, MED6, MED7, MED8, MED9, MED10, MED11, MED12, MED13, MED13L, MED14, MED15, MED16, MED17, MED18, MED19, MED20, MED21, MED22, MED23, MED24, MED25, MED26, MED27, MED29, MED30, MED31, CCNC, CDK8 and CDC2L6/CDK11. The MED12, MED13, CCNC and CDK8 subunits form a distinct module termed the CDK8 module. Mediator containing the CDK8 module is less active than Mediator lacking this module in supporting transcriptional activation. Individual preparations of the Mediator complex lacking one or more distinct subunits have been variously termed ARC, CRSP, DRIP, PC2, SMCC and TRAP.

The protein resides in the nucleus. Its function is as follows. Component of the Mediator complex, a coactivator involved in the regulated transcription of nearly all RNA polymerase II-dependent genes. Mediator functions as a bridge to convey information from gene-specific regulatory proteins to the basal RNA polymerase II transcription machinery. Mediator is recruited to promoters by direct interactions with regulatory proteins and serves as a scaffold for the assembly of a functional preinitiation complex with RNA polymerase II and the general transcription factors. In Bos taurus (Bovine), this protein is Mediator of RNA polymerase II transcription subunit 31 (MED31).